Here is a 212-residue protein sequence, read N- to C-terminus: Peptide methionine sulfoxide reductase MsrA (212 aa).

C52 is an active-site residue.

It belongs to the MsrA Met sulfoxide reductase family.

The catalysed reaction is L-methionyl-[protein] + [thioredoxin]-disulfide + H2O = L-methionyl-(S)-S-oxide-[protein] + [thioredoxin]-dithiol. It catalyses the reaction [thioredoxin]-disulfide + L-methionine + H2O = L-methionine (S)-S-oxide + [thioredoxin]-dithiol. Its function is as follows. Has an important function as a repair enzyme for proteins that have been inactivated by oxidation. Catalyzes the reversible oxidation-reduction of methionine sulfoxide in proteins to methionine. The polypeptide is Peptide methionine sulfoxide reductase MsrA (Shigella dysenteriae serotype 1 (strain Sd197)).